Here is a 146-residue protein sequence, read N- to C-terminus: MGGTTDFVLSITIVLVILIIIAYIWYNFTGWSPFKYSKGNTVTFKTPDDSSIAYMRFKNCVFTFTDPKGSLHSIDVTNVLNNMAKGFRDAQNPPSSFTLGGHCQAPLNAFSFILPGVNDRATVATADDAKKWENCDATLTGLQRII.

Residues 7-27 traverse the membrane as a helical segment; sequence FVLSITIVLVILIIIAYIWYN.

This sequence belongs to the asfivirus E146L family.

It localises to the host membrane. The protein localises to the virion. This is an uncharacterized protein from Ornithodoros (relapsing fever ticks).